We begin with the raw amino-acid sequence, 276 residues long: Caspase-6 (276 aa).

Residues 1–5 (MTETD) constitute a propeptide that is removed on maturation. The tract at residues 25 to 27 (KRR) is tri-arginine exosite. Serine 62 carries the phosphoserine modification. Histidine 104 is an active-site residue. The interval 108-125 (NHVYAYDAKIEIQTLTGL) is 130's region. Cysteine 146 is a catalytic residue. A propeptide spanning residues 163–175 (HQTDKLDNVTQVD) is cleaved from the precursor. Position 239 is a phosphoserine (serine 239). S-palmitoyl cysteine attachment occurs at residues cysteine 246 and cysteine 259.

Belongs to the peptidase C14A family. Heterotetramer that consists of two anti-parallel arranged heterodimers, each one formed by a 18 kDa (p18) and a 11 kDa (p11) subunit. Interacts with BIRC6/bruce. Interacts with RIPK3. As to quaternary structure, heterotetramer that consists of two anti-parallel arranged heterodimers, each one formed by a 18 kDa (Caspase-6 subunit p18) and a 11 kDa (Caspase-6 subunit p11) subunit. In terms of processing, phosphorylated by NUAK1; phosphorylation inhibits self-activation. Phosphorylation at Ser-239 by AMP-activated protein kinase (PRKAA1 or PRKAA2) inhibits autocleavage, preventing caspase activation, thereby preventing hepatocyte apoptosis. Post-translationally, palmitoylation by ZDHHC17 blocks dimerization and subsequent activation, leading to inhibit the cysteine protease activity. Can be cleaved and activated by different caspases, depending on the context. Cleaved and activated by caspase-8 (CASP8) and subsequently by caspase-3 (CASP3). Can also undergo autoactivation by mediating autocleavage at Asp-162 and Asp-175, while it is not able to cleave its N-terminal disordered prodomain. Cleaved and activated by CASP1, possibly in the context of inflammation. As to expression, highly expressed in lung, liver, kidney, testis, and heart. Lower levels in spleen, skeletal muscle and brain. Expressed in neurons.

It is found in the cytoplasm. The protein resides in the nucleus. The enzyme catalyses Strict requirement for Asp at position P1 and has a preferred cleavage sequence of Val-Glu-His-Asp-|-.. With respect to regulation, during activation, the N-terminal disordered prodomain is removed by cleavage. Concomitantly, double cleavage gives rise to a large 18-kDa and a small 11-kDa subunit. The two large and two small subunits then assemble to form the active CASP6 complex. Can be cleaved and activated by different caspases, depending on the context. Cleaved and activated by caspase-8 (CASP8) and subsequently by caspase-3 (CASP3). Can also undergo autoactivation by mediating autocleavage at Asp-162 and Asp-175, while it is not able to cleave its N-terminal disordered prodomain. Intramolecular cleavage at Asp-175 is a prerequisite for CASP6 self-activation. Cleaved and activated by CASP1 in neurons, possibly in the context of inflammation. Phosphorylation at Ser-239 inhibits autocleavage, preventing caspase activation. Cysteine protease that plays essential roles in programmed cell death, axonal degeneration, development and innate immunity. Acts as a non-canonical executioner caspase during apoptosis: localizes in the nucleus and cleaves the nuclear structural protein NUMA1 and lamin A/LMNA thereby inducing nuclear shrinkage and fragmentation. Lamin-A/LMNA cleavage is required for chromatin condensation and nuclear disassembly during apoptotic execution. Acts as a regulator of liver damage by promoting hepatocyte apoptosis: in absence of phosphorylation by AMP-activated protein kinase (AMPK), catalyzes cleavage of BID, leading to cytochrome c release, thereby participating in nonalcoholic steatohepatitis. Cleaves PARK7/DJ-1 in cells undergoing apoptosis. Involved in intrinsic apoptosis by mediating cleavage of RIPK1. Furthermore, cleaves many transcription factors such as NF-kappa-B and cAMP response element-binding protein/CREBBP. Cleaves phospholipid scramblase proteins XKR4 and XKR9. In addition to apoptosis, involved in different forms of programmed cell death. Plays an essential role in defense against viruses by acting as a central mediator of the ZBP1-mediated pyroptosis, apoptosis, and necroptosis (PANoptosis), independently of its cysteine protease activity. PANoptosis is a unique inflammatory programmed cell death, which provides a molecular scaffold that allows the interactions and activation of machinery required for inflammasome/pyroptosis, apoptosis and necroptosis. Mechanistically, interacts with RIPK3 and enhances the interaction between RIPK3 and ZBP1, leading to ZBP1-mediated inflammasome activation and cell death. Plays an essential role in axon degeneration during axon pruning which is the remodeling of axons during neurogenesis but not apoptosis. Regulates B-cell programs both during early development and after antigen stimulation. Functionally, (Microbial infection) Proteolytically cleaves the N protein of coronaviruses. The cleavage leads to two fragments and modulates coronavirus replication by regulating IFN signaling. The two fragments produced by the cleavage interact with IRF3 inhibiting its nuclear translocation after activation and reduce the expression of IFNB and IFN-stimulated genes. The polypeptide is Caspase-6 (Mus musculus (Mouse)).